Here is a 154-residue protein sequence, read N- to C-terminus: Cyanate hydratase (154 aa).

Active-site residues include Arg100, Glu103, and Ser126.

Belongs to the cyanase family.

It catalyses the reaction cyanate + hydrogencarbonate + 3 H(+) = NH4(+) + 2 CO2. Functionally, catalyzes the reaction of cyanate with bicarbonate to produce ammonia and carbon dioxide. This Aspergillus terreus (strain NIH 2624 / FGSC A1156) protein is Cyanate hydratase.